The chain runs to 339 residues: Dihydroorotate dehydrogenase (quinone) (339 aa).

FMN contacts are provided by residues 62-66 (AGMDK) and T86. K66 contacts substrate. Substrate is bound at residue 111–115 (NRMGF). FMN-binding residues include N139 and N172. Residue N172 coordinates substrate. Catalysis depends on S175, which acts as the Nucleophile. N177 serves as a coordination point for substrate. 2 residues coordinate FMN: K217 and T245. A substrate-binding site is contributed by 246–247 (NT). Residues G268, G297, and 318–319 (YS) contribute to the FMN site.

The protein belongs to the dihydroorotate dehydrogenase family. Type 2 subfamily. Monomer. It depends on FMN as a cofactor.

The protein resides in the cell membrane. The catalysed reaction is (S)-dihydroorotate + a quinone = orotate + a quinol. It functions in the pathway pyrimidine metabolism; UMP biosynthesis via de novo pathway; orotate from (S)-dihydroorotate (quinone route): step 1/1. Its function is as follows. Catalyzes the conversion of dihydroorotate to orotate with quinone as electron acceptor. This chain is Dihydroorotate dehydrogenase (quinone), found in Shewanella baltica (strain OS155 / ATCC BAA-1091).